Here is a 66-residue protein sequence, read N- to C-terminus: Large ribosomal subunit protein bL35 (66 aa).

The span at 1–28 shows a compositional bias: basic residues; it reads MPKMKTHRGSAKRFKRTGSGKLKRRHGF. The interval 1-50 is disordered; the sequence is MPKMKTHRGSAKRFKRTGSGKLKRRHGFTSHMFANKSQKQKRKLRKSAMV.

Belongs to the bacterial ribosomal protein bL35 family.

This is Large ribosomal subunit protein bL35 from Listeria monocytogenes serotype 4a (strain HCC23).